Consider the following 760-residue polypeptide: DEAD-box ATP-dependent RNA helicase 24 (760 aa).

2 disordered regions span residues 1 to 76 (MSNR…GEVD) and 90 to 113 (QEMK…DDDD). Residues 14-27 (NRQTSYSFERSQAP) are compositionally biased toward polar residues. The span at 41–64 (NSEDADLDNIDYMENEEAEEDIEE) shows a compositional bias: acidic residues. A compositionally biased stretch (basic and acidic residues) spans 99 to 109 (KPKEKLERYKD). S160 is modified (phosphoserine). The short motif at 228–256 (KTFEDCGFSSQIMSAIKKQAYEKPTAIQC) is the Q motif element. The region spanning 259–434 (LPIVLSGRDV…REILSDPIRV (176 aa)) is the Helicase ATP-binding domain. 272-279 (AKTGSGKT) contacts ATP. The DEAD box signature appears at 382-385 (DEAD). The Helicase C-terminal domain occupies 459–608 (KLPWLLEKLP…NVPPELTDLA (150 aa)). Disordered stretches follow at residues 604-638 (LTDL…KGVR), 647-666 (GFSS…SRSG), and 706-760 (FVSG…GWDN). Over residues 615 to 628 (KSKRDGRKGGKKGR) the composition is skewed to basic residues. Residues 629–638 (GGGGGNKGVR) show a composition bias toward gly residues. A compositionally biased stretch (polar residues) spans 649-666 (SSESSRTPSSKAAPSRSG). Over residues 707–716 (VSGGTIGGDM) the composition is skewed to gly residues. Residues 718-732 (RTQSQAPPVAPTQNA) are compositionally biased toward polar residues. Low complexity predominate over residues 733–745 (SSHNSSQNHSQSS). Basic residues predominate over residues 750-760 (RERKRRSGWDN).

Belongs to the DEAD box helicase family.

It catalyses the reaction ATP + H2O = ADP + phosphate + H(+). This chain is DEAD-box ATP-dependent RNA helicase 24 (RH24), found in Arabidopsis thaliana (Mouse-ear cress).